The primary structure comprises 157 residues: Small ribosomal subunit protein uS7 (157 aa).

This sequence belongs to the universal ribosomal protein uS7 family. In terms of assembly, part of the 30S ribosomal subunit. Contacts proteins S9 and S11.

Functionally, one of the primary rRNA binding proteins, it binds directly to 16S rRNA where it nucleates assembly of the head domain of the 30S subunit. Is located at the subunit interface close to the decoding center, probably blocks exit of the E-site tRNA. The protein is Small ribosomal subunit protein uS7 of Francisella tularensis subsp. holarctica (strain OSU18).